We begin with the raw amino-acid sequence, 397 residues long: CCA-adding enzyme (397 aa).

ATP is bound by residues G26 and R29. Positions 26 and 29 each coordinate CTP. Mg(2+)-binding residues include D39 and D41. R110, D153, R156, R159, and R162 together coordinate ATP. CTP-binding residues include R110, D153, R156, R159, and R162.

Belongs to the tRNA nucleotidyltransferase/poly(A) polymerase family. Bacterial CCA-adding enzyme type 3 subfamily. Homodimer. The cofactor is Mg(2+).

It catalyses the reaction a tRNA precursor + 2 CTP + ATP = a tRNA with a 3' CCA end + 3 diphosphate. The enzyme catalyses a tRNA with a 3' CCA end + 2 CTP + ATP = a tRNA with a 3' CCACCA end + 3 diphosphate. Functionally, catalyzes the addition and repair of the essential 3'-terminal CCA sequence in tRNAs without using a nucleic acid template. Adds these three nucleotides in the order of C, C, and A to the tRNA nucleotide-73, using CTP and ATP as substrates and producing inorganic pyrophosphate. tRNA 3'-terminal CCA addition is required both for tRNA processing and repair. Also involved in tRNA surveillance by mediating tandem CCA addition to generate a CCACCA at the 3' terminus of unstable tRNAs. While stable tRNAs receive only 3'-terminal CCA, unstable tRNAs are marked with CCACCA and rapidly degraded. The protein is CCA-adding enzyme of Bacillus cereus (strain ATCC 10987 / NRS 248).